The primary structure comprises 198 residues: Nucleoplasmin (198 aa).

The acidic tract A1 stretch occupies residues 35-38 (SDED). Residues 125–145 (SWAEEEGEEEVEEEEEEEDPE) show a composition bias toward acidic residues. Residues 125–198 (SWAEEEGEEE…GRGRKPAAKK (74 aa)) form a disordered region. The segment at 128-145 (EEEGEEEVEEEEEEEDPE) is acidic tract A2. Positions 150 to 167 (AVKRPAASKKGSQAKKKK) are enriched in basic residues. Residues 152–167 (KRPAASKKGSQAKKKK) carry the Bipartite nuclear localization signal motif. Residues 172 to 174 (EEE) are acidic tract A3. Residues 183–198 (KKGKGAGRGRKPAAKK) are compositionally biased toward basic residues.

The protein belongs to the nucleoplasmin family. As to quaternary structure, homopentamer. As to expression, expressed in oocytes.

The protein resides in the nucleus. Acts as a chaperone for histones, such as histone H2A-H2B, and thus regulates the assembly of nucleosome cores. Involved in chromatin remodeling, especially during fertilization and early embryonic development. May be involved in sperm chromatin decondensation during fertilization. The polypeptide is Nucleoplasmin (Rhinella marina (Cane toad)).